The sequence spans 428 residues: Nematode resistance protein-like HSPRO1 (428 aa).

Interacts with SNF4.

It localises to the cytoplasm. Its function is as follows. Positive regulator of basal resistance. In Arabidopsis thaliana (Mouse-ear cress), this protein is Nematode resistance protein-like HSPRO1 (HSPRO1).